A 1142-amino-acid polypeptide reads, in one-letter code: Golgi apparatus protein 1 (1142 aa).

The signal sequence occupies residues Met-1 to Ala-29. Residues Gly-30–Asn-1108 are Extracellular-facing. The segment covering Ala-45–Arg-60 has biased composition (low complexity). The disordered stretch occupies residues Ala-45 to Ser-69. 16 Cys-rich GLG1 repeats span residues Cys-81–Asn-112, Glu-113–Thr-175, Gln-178–Ala-241, Gln-249–Ser-309, Met-310–Arg-376, Gln-377–Lys-436, Asn-438–Lys-500, Met-501–Glu-567, Arg-572–Val-631, Asp-633–Lys-691, Glu-692–Thr-751, Arg-759–Ser-819, Arg-821–Glu-874, Val-875–Arg-942, Leu-943–Lys-998, and Ile-1004–Arg-1064. N-linked (GlcNAc...) asparagine glycosylation is found at Asn-128 and Asn-173. Asn-544 is a glycosylation site (N-linked (GlcNAc...) asparagine). Asn-640 and Asn-749 each carry an N-linked (GlcNAc...) asparagine glycan. A helical membrane pass occupies residues Tyr-1109 to Gly-1129. Topologically, residues Arg-1130–Arg-1142 are cytoplasmic.

In terms of processing, fucosylation is essential for binding to E-selectin. Post-translationally, N-glycosylated. Contains sialic acid residues.

It is found in the golgi apparatus membrane. The protein localises to the golgi outpost. It localises to the cytoplasm. Its subcellular location is the cytoskeleton. The protein resides in the microtubule organizing center. Functionally, binds fibroblast growth factor and E-selectin (cell-adhesion lectin on endothelial cells mediating the binding of neutrophils). Binds fibroblast growth factor (FGF). May be involved in intracellular FGF trafficking and the regulation of cellular responses to FGFS. The sequence is that of Golgi apparatus protein 1 (GLG1) from Gallus gallus (Chicken).